The sequence spans 226 residues: 7-cyano-7-deazaguanine synthase (226 aa).

7–17 lines the ATP pocket; it reads LSGGMDSLVTT. Positions 187, 195, 198, and 201 each coordinate Zn(2+).

It belongs to the QueC family. Requires Zn(2+) as cofactor.

It catalyses the reaction 7-carboxy-7-deazaguanine + NH4(+) + ATP = 7-cyano-7-deazaguanine + ADP + phosphate + H2O + H(+). It functions in the pathway purine metabolism; 7-cyano-7-deazaguanine biosynthesis. Its function is as follows. Catalyzes the ATP-dependent conversion of 7-carboxy-7-deazaguanine (CDG) to 7-cyano-7-deazaguanine (preQ(0)). This is 7-cyano-7-deazaguanine synthase from Chloroherpeton thalassium (strain ATCC 35110 / GB-78).